We begin with the raw amino-acid sequence, 502 residues long: Probable cytochrome P450 313b1 (502 aa).

Residue Cys-449 participates in heme binding.

Belongs to the cytochrome P450 family. It depends on heme as a cofactor.

The protein localises to the endoplasmic reticulum membrane. The protein resides in the microsome membrane. Functionally, may be involved in the metabolism of insect hormones and in the breakdown of synthetic insecticides. The sequence is that of Probable cytochrome P450 313b1 (Cyp313b1) from Drosophila melanogaster (Fruit fly).